The sequence spans 449 residues: Phosphoglucosamine mutase (449 aa).

Serine 101 serves as the catalytic Phosphoserine intermediate. Residues serine 101, aspartate 242, aspartate 244, and aspartate 246 each contribute to the Mg(2+) site. Serine 101 is subject to Phosphoserine.

This sequence belongs to the phosphohexose mutase family. Mg(2+) is required as a cofactor. Activated by phosphorylation.

It carries out the reaction alpha-D-glucosamine 1-phosphate = D-glucosamine 6-phosphate. Catalyzes the conversion of glucosamine-6-phosphate to glucosamine-1-phosphate. The protein is Phosphoglucosamine mutase of Hyphomonas neptunium (strain ATCC 15444).